We begin with the raw amino-acid sequence, 230 residues long: MTQKHGKKYTAALAKVEAEKNYALNDAVALVKEIDYANFDASVEVAFKLNVDTRQADQQLRGAVVLPNGTGKDKKVIVFAQGDKAKEAEAAGADVVGAADLVAQIQGGWMDFDTAIATPDMMAQVGRVARILGPKGMMPNPKTGTVTMDVAKAVSDAKGGQVTYRTDRDGNVAVPVGRVSFEEGKLAENIKTIADTVLKARPAAVKGTYVQHVSIASTFGPAVALDLNTL.

Belongs to the universal ribosomal protein uL1 family. As to quaternary structure, part of the 50S ribosomal subunit.

Binds directly to 23S rRNA. The L1 stalk is quite mobile in the ribosome, and is involved in E site tRNA release. In terms of biological role, protein L1 is also a translational repressor protein, it controls the translation of the L11 operon by binding to its mRNA. This is Large ribosomal subunit protein uL1 from Leuconostoc citreum (strain KM20).